A 473-amino-acid polypeptide reads, in one-letter code: Glutamate-1-semialdehyde 2,1-aminomutase, chloroplastic (473 aa).

The transit peptide at 1–37 (MSATLTGSGTALGFSCSSKISKRVSSSPSTRCSIKMS) directs the protein to the chloroplast. At Lys-313 the chain carries N6-(pyridoxal phosphate)lysine.

It belongs to the class-III pyridoxal-phosphate-dependent aminotransferase family. HemL subfamily. In terms of assembly, homodimer. It depends on pyridoxal 5'-phosphate as a cofactor.

The protein localises to the plastid. The protein resides in the chloroplast. It carries out the reaction (S)-4-amino-5-oxopentanoate = 5-aminolevulinate. The protein operates within porphyrin-containing compound metabolism; protoporphyrin-IX biosynthesis; 5-aminolevulinate from L-glutamyl-tRNA(Glu): step 2/2. It functions in the pathway porphyrin-containing compound metabolism; chlorophyll biosynthesis. This is Glutamate-1-semialdehyde 2,1-aminomutase, chloroplastic (GSA) from Brassica napus (Rape).